We begin with the raw amino-acid sequence, 301 residues long: ADP-ribosyl cyclase/cyclic ADP-ribose hydrolase 1 (301 aa).

At 1-21 the chain is on the cytoplasmic side; it reads MANCEFSPVSGDKPCCRLSRR. Residues 22 to 43 traverse the membrane as a helical; Signal-anchor for type II membrane protein segment; that stretch reads AQVCLGVCLLVLLILVVVVAVV. Residues 44-301 are Extracellular-facing; that stretch reads LPRWRQQWSG…PEDSSCLSGI (258 aa). Intrachain disulfides connect Cys68–Cys83, Cys100–Cys181, and Cys161–Cys174. N-linked (GlcNAc...) asparagine glycosylation occurs at Asn101. Residue Cys120 is part of the active site. An N-linked (GlcNAc...) asparagine glycan is attached at Asn121. The active site involves Cys202. N-linked (GlcNAc...) asparagine glycosylation is found at Asn210 and Asn220. Cystine bridges form between Cys255–Cys276 and Cys288–Cys297.

Belongs to the ADP-ribosyl cyclase family. In terms of assembly, homodimer.

The protein localises to the cell surface. Its subcellular location is the membrane. The catalysed reaction is NAD(+) = cyclic ADP-beta-D-ribose + nicotinamide + H(+). The enzyme catalyses 2'-phospho-cyclic ADP-ribose + nicotinate = nicotinate-adenine dinucleotide phosphate. It carries out the reaction NAD(+) + H2O = ADP-D-ribose + nicotinamide + H(+). It catalyses the reaction nicotinate + NADP(+) = nicotinate-adenine dinucleotide phosphate + nicotinamide. ATP inhibits the cADPR hydrolyzing activity. Functionally, synthesizes cyclic ADP-ribose (cADPR), a second messenger for glucose-induced insulin secretion. Synthesizes the Ca(2+) mobilizer nicotinate-adenine dinucleotide phosphate, NAADP(+), from 2'-phospho-cADPR and nicotinic acid, as well as from NADP(+) and nicotinic acid. Also has cADPR hydrolase activity. The sequence is that of ADP-ribosyl cyclase/cyclic ADP-ribose hydrolase 1 (CD38) from Macaca fascicularis (Crab-eating macaque).